Here is a 260-residue protein sequence, read N- to C-terminus: Pyridoxine 5'-phosphate synthase (260 aa).

Asn15 is a binding site for 3-amino-2-oxopropyl phosphate. Residue 17–18 (DH) coordinates 1-deoxy-D-xylulose 5-phosphate. Arg26 lines the 3-amino-2-oxopropyl phosphate pocket. Residue His51 is the Proton acceptor of the active site. 1-deoxy-D-xylulose 5-phosphate is bound by residues Arg53 and His58. Residue Glu78 is the Proton acceptor of the active site. Thr108 lines the 1-deoxy-D-xylulose 5-phosphate pocket. Residue His199 is the Proton donor of the active site. Residues Gly200 and 221-222 (GH) each bind 3-amino-2-oxopropyl phosphate.

The protein belongs to the PNP synthase family. Homooctamer; tetramer of dimers.

It is found in the cytoplasm. It carries out the reaction 3-amino-2-oxopropyl phosphate + 1-deoxy-D-xylulose 5-phosphate = pyridoxine 5'-phosphate + phosphate + 2 H2O + H(+). Its pathway is cofactor biosynthesis; pyridoxine 5'-phosphate biosynthesis; pyridoxine 5'-phosphate from D-erythrose 4-phosphate: step 5/5. Functionally, catalyzes the complicated ring closure reaction between the two acyclic compounds 1-deoxy-D-xylulose-5-phosphate (DXP) and 3-amino-2-oxopropyl phosphate (1-amino-acetone-3-phosphate or AAP) to form pyridoxine 5'-phosphate (PNP) and inorganic phosphate. The sequence is that of Pyridoxine 5'-phosphate synthase from Cupriavidus necator (strain ATCC 17699 / DSM 428 / KCTC 22496 / NCIMB 10442 / H16 / Stanier 337) (Ralstonia eutropha).